The chain runs to 314 residues: Nucleoprotein (314 aa).

Position 1 is an N-acetylmethionine; by host (M1). Residues Y38, Y41, R118, K237, and S266 each contribute to the RNA site.

Belongs to the tenuiviruses nucleocapsid protein family.

It localises to the virion. The protein resides in the host cytoplasm. Encapsidates the genome, protecting it from nucleases. The encapsidated genomic RNA is termed the nucleocapsid (NC), and serves as template for viral transcription and replication. The sequence is that of Nucleoprotein from Wheat yellow head virus (WYHV).